Consider the following 294-residue polypeptide: tRNA pseudouridine synthase A (294 aa).

Asp64 functions as the Nucleophile in the catalytic mechanism. Tyr122 serves as a coordination point for substrate.

This sequence belongs to the tRNA pseudouridine synthase TruA family. In terms of assembly, homodimer.

It catalyses the reaction uridine(38/39/40) in tRNA = pseudouridine(38/39/40) in tRNA. Formation of pseudouridine at positions 38, 39 and 40 in the anticodon stem and loop of transfer RNAs. This chain is tRNA pseudouridine synthase A, found in Synechococcus sp. (strain ATCC 27144 / PCC 6301 / SAUG 1402/1) (Anacystis nidulans).